A 415-amino-acid chain; its full sequence is N-succinylarginine dihydrolase (415 aa).

Substrate-binding positions include 18 to 27, Asn100, and 127 to 128; these read AGLSRGNIAS and HR. Residue Glu161 is part of the active site. Arg193 contacts substrate. His229 is a catalytic residue. 2 residues coordinate substrate: Asp231 and Asn340. Residue Cys346 is the Nucleophile of the active site.

Belongs to the succinylarginine dihydrolase family. Homodimer.

The catalysed reaction is N(2)-succinyl-L-arginine + 2 H2O + 2 H(+) = N(2)-succinyl-L-ornithine + 2 NH4(+) + CO2. It functions in the pathway amino-acid degradation; L-arginine degradation via AST pathway; L-glutamate and succinate from L-arginine: step 2/5. In terms of biological role, catalyzes the hydrolysis of N(2)-succinylarginine into N(2)-succinylornithine, ammonia and CO(2). The polypeptide is N-succinylarginine dihydrolase (Sphingopyxis alaskensis (strain DSM 13593 / LMG 18877 / RB2256) (Sphingomonas alaskensis)).